The primary structure comprises 77 residues: Acyl carrier protein (77 aa).

A Carrier domain is found at 2–77; that stretch reads ADVMERVTKI…DVVDYINNNQ (76 aa). Position 37 is an O-(pantetheine 4'-phosphoryl)serine (Ser-37).

Belongs to the acyl carrier protein (ACP) family. In terms of processing, 4'-phosphopantetheine is transferred from CoA to a specific serine of apo-ACP by AcpS. This modification is essential for activity because fatty acids are bound in thioester linkage to the sulfhydryl of the prosthetic group.

The protein localises to the cytoplasm. The protein operates within lipid metabolism; fatty acid biosynthesis. Carrier of the growing fatty acid chain in fatty acid biosynthesis. This chain is Acyl carrier protein, found in Shouchella clausii (strain KSM-K16) (Alkalihalobacillus clausii).